Reading from the N-terminus, the 153-residue chain is Ribosome maturation factor RimP (153 aa).

Belongs to the RimP family.

The protein resides in the cytoplasm. Required for maturation of 30S ribosomal subunits. In Clostridium botulinum (strain Kyoto / Type A2), this protein is Ribosome maturation factor RimP.